Consider the following 468-residue polypeptide: Zinc finger CCCH domain-containing protein 32 (468 aa).

The disordered stretch occupies residues 1–25 (MYARNPPLNGSQSAQAPDWTPADAD). 5 consecutive C3H1-type zinc fingers follow at residues 45-73 (RPGA…HPRD), 90-118 (RFGE…HPKN), 136-164 (REGD…HPQP), 289-317 (RPGE…HPRD), and 335-363 (RPGV…HPMG).

The protein localises to the nucleus. This is Zinc finger CCCH domain-containing protein 32 from Arabidopsis thaliana (Mouse-ear cress).